The following is a 223-amino-acid chain: Cytidylate kinase (223 aa).

Residue 10–18 participates in ATP binding; it reads GPASSGKST.

The protein belongs to the cytidylate kinase family. Type 1 subfamily.

The protein localises to the cytoplasm. The enzyme catalyses CMP + ATP = CDP + ADP. It catalyses the reaction dCMP + ATP = dCDP + ADP. This is Cytidylate kinase from Streptococcus pneumoniae (strain Taiwan19F-14).